We begin with the raw amino-acid sequence, 189 residues long: GTP cyclohydrolase 1 (189 aa).

Zn(2+)-binding residues include C79, H82, and C150.

The protein belongs to the GTP cyclohydrolase I family. As to quaternary structure, homomer.

The enzyme catalyses GTP + H2O = 7,8-dihydroneopterin 3'-triphosphate + formate + H(+). It functions in the pathway cofactor biosynthesis; 7,8-dihydroneopterin triphosphate biosynthesis; 7,8-dihydroneopterin triphosphate from GTP: step 1/1. The sequence is that of GTP cyclohydrolase 1 from Rickettsia rickettsii (strain Iowa).